Consider the following 257-residue polypeptide: Hydroxypyruvate/pyruvate aldolase (257 aa).

The active-site Proton acceptor is the His48. A divalent metal cation-binding residues include Glu152 and Asp178.

Belongs to the HpcH/HpaI aldolase family. A divalent metal cation serves as cofactor.

The catalysed reaction is D-glyceraldehyde + 3-hydroxypyruvate = 2-dehydro-D-gluconate. The enzyme catalyses D-glyceraldehyde + pyruvate = 2-dehydro-3-deoxy-L-galactonate. It carries out the reaction 2-dehydro-3-deoxy-D-gluconate = D-glyceraldehyde + pyruvate. In terms of biological role, aldolase which can catalyze in vitro the aldolisation reaction between hydroxypyruvate (HPA) or pyruvate (PA) and D-glyceraldehyde (D-GA). The condensation of hydroxypyruvate and D-glyceraldehyde produces 2-dehydro-D-gluconate as the major product. The condensation of pyruvate and D-glyceraldehyde produces 2-dehydro-3-deoxy-L-galactonate as the major product and 2-dehydro-3-deoxy-D-gluconate. The sequence is that of Hydroxypyruvate/pyruvate aldolase from Roseovarius nubinhibens (strain ATCC BAA-591 / DSM 15170 / ISM).